The following is a 142-amino-acid chain: Large ribosomal subunit protein uL11 (142 aa).

Belongs to the universal ribosomal protein uL11 family. Part of the ribosomal stalk of the 50S ribosomal subunit. Interacts with L10 and the large rRNA to form the base of the stalk. L10 forms an elongated spine to which L12 dimers bind in a sequential fashion forming a multimeric L10(L12)X complex. In terms of processing, one or more lysine residues are methylated.

Its function is as follows. Forms part of the ribosomal stalk which helps the ribosome interact with GTP-bound translation factors. The polypeptide is Large ribosomal subunit protein uL11 (Bartonella quintana (strain Toulouse) (Rochalimaea quintana)).